Reading from the N-terminus, the 587-residue chain is Prolycopene isomerase 1, chloroplastic (587 aa).

Low complexity predominate over residues 1 to 13; the sequence is MLCLSLNSSSTSP. The interval 1-21 is disordered; that stretch reads MLCLSLNSSSTSPPKSPLHHS. Residues 1 to 50 constitute a chloroplast transit peptide; sequence MLCLSLNSSSTSPPKSPLHHSFSRRSMRSWVCSPRVQRKKLGFWSSPKAV.

The protein belongs to the carotenoid/retinoid oxidoreductase family. CrtISO subfamily. Requires NAD(+) as cofactor. NADP(+) serves as cofactor. FAD is required as a cofactor. In terms of tissue distribution, up-regulated in the flower buds and flower lip tissue, while it is weakly expressed in leaves.

The protein localises to the plastid. It localises to the chloroplast membrane. The enzyme catalyses 7,7',9,9'-tetra-cis-lycopene = all-trans-lycopene. It participates in carotenoid biosynthesis; lycopene biosynthesis. Carotene cis-trans-isomerase that converts 7,9,9'-tri-cis-neurosporene to 9'-cis-neurosporene and 7,9,9',7'-tetra-cis-lycopene (also known as prolycopene) into all-trans-lycopene. Isomerization requires redox-active components, suggesting that isomerization is achieved by a reversible redox reaction acting at specific double bonds. Isomerizes adjacent cis-double bonds at C7 and C9 pairwise into the trans-configuration, but is incapable of isomerizing single cis-double bonds at C9 and C9'. The chain is Prolycopene isomerase 1, chloroplastic (CRTISO1) from Oncidium hybrid cultivar (Orchid).